A 359-amino-acid chain; its full sequence is Acyl-CoA desaturase 3 (359 aa).

The tract at residues 1–34 (MPGHLLQEEMTPSYTTTTTITAPPSGSLQNGREK) is disordered. The Cytoplasmic portion of the chain corresponds to 1–72 (MPGHLLQEEM…EGPPPKLEYV (72 aa)). A compositionally biased stretch (low complexity) spans 11 to 27 (TPSYTTTTTITAPPSGS). Residues 73 to 93 (WRNIILMALLHVGALYGITLV) form a helical membrane-spanning segment. Residue Asn75 participates in substrate binding. The Lumenal portion of the chain corresponds to 94–97 (PSCK). A helical membrane pass occupies residues 98 to 118 (LYTCLFAFVYYVISIEGIGAG). Residues 119–217 (VHRLWSHRTY…EKLVMFQRRY (99 aa)) lie on the Cytoplasmic side of the membrane. His120 and His125 together coordinate Fe cation. A Histidine box-1 motif is present at residues 120 to 125 (HRLWSH). Residues Asn148, Arg155, and Asp156 each coordinate substrate. Fe cation contacts are provided by His157, His160, and His161. The Histidine box-2 signature appears at 157 to 161 (HRAHH). Positions 188 and 189 each coordinate substrate. Ser203 carries the phosphoserine modification. Residues 218-237 (YKPGILLMCFILPTLVPWYC) traverse the membrane as a helical segment. Residues 238 to 241 (WGET) are Lumenal-facing. Residues 242-263 (FLNSFYVATLLRYAVVLNATWL) traverse the membrane as a helical segment. Residue Trp262 coordinates substrate. The Cytoplasmic segment spans residues 264-359 (VNSAAHLYGY…RTGDGSHKSG (96 aa)). 4 residues coordinate Fe cation: His269, His298, His301, and His302. Residues 298 to 302 (HNYHH) carry the Histidine box-3 motif.

This sequence belongs to the fatty acid desaturase type 1 family. It depends on Fe(2+) as a cofactor. Detected in skin, but at lower levels compared to Scd1. Detected in the middlle part of the sebaceous gland, but not in hair follicle. Not detected in liver and brain.

The protein localises to the endoplasmic reticulum membrane. It is found in the microsome membrane. It catalyses the reaction hexadecanoyl-CoA + 2 Fe(II)-[cytochrome b5] + O2 + 2 H(+) = (9Z)-hexadecenoyl-CoA + 2 Fe(III)-[cytochrome b5] + 2 H2O. Functionally, stearoyl-CoA desaturase that utilizes O(2) and electrons from reduced cytochrome b5 to introduce the first double bond into saturated fatty acyl-CoA substrates. Catalyzes the insertion of a cis double bond at the delta-9 position into fatty acyl-CoA substrates including palmitoyl-CoA. Has a strong preference for saturated fatty acids with chain lengths of 14 or 16 carbon atoms (C14:0 and C16:0), and has only very low activity with stearatate (C18:0). Required for the biosynthesis of membrane phospholipids, cholesterol esters and triglycerides. This Mus musculus (Mouse) protein is Acyl-CoA desaturase 3.